A 158-amino-acid polypeptide reads, in one-letter code: Snaclec coagulation factor X-activating enzyme light chain 2 (158 aa).

The signal sequence occupies residues 1–23 (MGRSISVSFGLLAVFLSLSGTGA). 3 disulfide bridges follow: cysteine 27-cysteine 38, cysteine 55-cysteine 152, and cysteine 127-cysteine 144. In terms of domain architecture, C-type lectin spans 34-153 (YRYFCYRVFK…CEEPYPFVCK (120 aa)).

It belongs to the snaclec family. In terms of assembly, heterotrimer; disulfide-linked. The heterotrimer consists of 1 heavy chain (a metalloproteinase) and 2 light chains: LC1 and LC2. Expressed by the venom gland.

The protein resides in the secreted. Regulatory subunit of the blood coagulation factor X-activating enzyme. Activates coagulation factor X (F10) by cleaving the Arg-Ile bond at position 234, activates coagulation factor IX (F9) by cleaving the Arg-Val bond at position 226 and is also able to activate protein C (PROC). May serve as an exosite by which the enzyme recognizes and binds to the Gla domain of factor X (F10) in a calcium-dependent manner. The polypeptide is Snaclec coagulation factor X-activating enzyme light chain 2 (LC2) (Macrovipera lebetinus (Levantine viper)).